The primary structure comprises 242 residues: Protein HTATIP2 (242 aa).

Residue Ala2 is modified to N-acetylalanine. Residues 2-25 (AETEALSKLREDFRMQNKSVFILG) form a required for interaction with elongation factor EEF1A1 region. Residues Ser27, Gly28, Glu29, Thr30, Arg52, Arg53, Leu92, Gly93, Tyr143, Lys147, and Arg178 each coordinate NADPH. Tyr143 functions as the Proton acceptor in the catalytic mechanism. Lys147 is an active-site residue.

Monomer. Forms homodimers during oxidative stress. Interacts (via N-terminus) with elongation factor EEF1A1 (via middle-region); the interaction is direct and competes with EEF1A1 binding to guanyl-nucleotide exchange factor EEF1B2, thereby inhibiting GDP for GTP exchange and reactivation of EEF1A1. Interacts with nuclear transport receptors XPO4, IPO5/RANBP5, IPO7, IPO9 and KPNB1 as well as GCN1L1/GCN1 and LRPPRC probably through their HEAT repeats. Binds NCOA5/CIA.

It localises to the cytoplasm. Represses translation by preventing reactivation of elongation factor eEF1A. May also inhibit nuclear import by competing with nuclear import substrates for binding to a subset of nuclear transport receptors. Has additionally been proposed to act as a redox sensor involved in cellular oxidative stress surveillance. This Pan paniscus (Pygmy chimpanzee) protein is Protein HTATIP2 (HTATIP2).